The sequence spans 300 residues: GTPase Era (300 aa).

The region spanning 5 to 176 (RSGFVCLIGR…IDVLAAALPP (172 aa)) is the Era-type G domain. The tract at residues 13-20 (GRPNTGKS) is G1. 13-20 (GRPNTGKS) contacts GTP. The segment at 39 to 43 (QTTRH) is G2. The segment at 61 to 64 (DTPG) is G3. Residues 61–65 (DTPGL) and 125–128 (TKID) each bind GTP. Residues 125-128 (TKID) are G4. The G5 stretch occupies residues 155–157 (VSA). The KH type-2 domain maps to 207 to 286 (VHDELPHSLA…YLDLHVNVAK (80 aa)).

This sequence belongs to the TRAFAC class TrmE-Era-EngA-EngB-Septin-like GTPase superfamily. Era GTPase family. Monomer.

It is found in the cell envelope. The protein localises to the secreted. Its subcellular location is the cell wall. Its function is as follows. Exhibits GTPase activity. Binds RNA but is probably not involved in ribosome assembly in mycobacteria. This Mycobacterium leprae (strain TN) protein is GTPase Era.